We begin with the raw amino-acid sequence, 321 residues long: Sex-lethal homolog (321 aa).

RRM domains follow at residues Thr78 to Pro156 and Thr164 to Glu244.

Expressed in gonads and somatic tissues of both sexes. In the ovary, expressed in the last egg chamber of each ovariole. Highly expressed in nurse cells with low expression found in oocytes. Highly expressed in testis with lower expression in testis sheath and vas deferentia.

It localises to the nucleus. Its function is as follows. Unknown; apparently not involved in somatic sex determination. The protein is Sex-lethal homolog (SXL) of Megaselia scalaris (Humpbacked fly).